A 487-amino-acid chain; its full sequence is Variant surface glycoprotein WRATAT B (487 aa).

Residues 1 to 19 (MWIILALLTLAGSRVAHGA) form the signal peptide. 4 N-linked (GlcNAc...) asparagine glycosylation sites follow: asparagine 71, asparagine 84, asparagine 418, and asparagine 465. The interval 443–468 (KPKAGTEAATTGPGERDAGATANTTG) is disordered. Serine 470 carries the GPI-anchor amidated serine lipid modification. The propeptide at 471–487 (NSFVIKTSPLLFAFLLF) is removed in mature form.

It localises to the cell membrane. Functionally, VSG forms a coat on the surface of the parasite. The trypanosome evades the immune response of the host by expressing a series of antigenically distinct VSGs from an estimated 1000 VSG genes. The protein is Variant surface glycoprotein WRATAT B of Trypanosoma brucei rhodesiense.